A 194-amino-acid polypeptide reads, in one-letter code: MRARVLVGMLTMVGFAMGKAPVARVRTCHLCLLEDPSLGCISGSEKCTISLPSPCMVITIYKNTTVRFHVRGCGQHHSYRCQERHVIYQSDYLYKADCCQYDYCNSWSSAQHQSTLRGSPGSHLGMPLSASQIKQFYQALNLSLPQPGFHAHKVSEGLESLILPPELGLSIADLRQIYLFLNSSGLLVLPWDRP.

The first 18 residues, Met1–Gly18, serve as a signal peptide directing secretion. Residues Arg26–Gly118 enclose the UPAR/Ly6 domain. 5 disulfide bridges follow: Cys28-Cys55, Cys31-Cys40, Cys47-Cys73, Cys81-Cys98, and Cys99-Cys104. An N-linked (GlcNAc...) asparagine glycan is attached at Asn63. Asn141 carries an N-linked (GlcNAc...) asparagine glycan.

Monomer. In terms of processing, N-glycosylated.

The protein localises to the secreted. This Mus musculus (Mouse) protein is Lymphocyte antigen 6 complex locus protein G5b (Ly6g5b).